Here is a 126-residue protein sequence, read N- to C-terminus: Histone H2B type 2-B (126 aa).

Residues 1–12 (MPDPAKSAPAPK) are compositionally biased toward low complexity. Residues 1–36 (MPDPAKSAPAPKKGSKKAVTKVQKKDGKKRKRSRKE) are disordered. The residue at position 2 (Pro-2) is an N-acetylproline. Residue Lys-6 is modified to N6-(2-hydroxyisobutyryl)lysine; alternate. Lys-6 is subject to N6-(beta-hydroxybutyryl)lysine; alternate. Residue Lys-6 is modified to N6-acetyllysine; alternate. At Lys-6 the chain carries N6-butyryllysine; alternate. Position 6 is an N6-crotonyllysine; alternate (Lys-6). The residue at position 6 (Lys-6) is an N6-lactoyllysine; alternate. Lys-6 is covalently cross-linked (Glycyl lysine isopeptide (Lys-Gly) (interchain with G-Cter in SUMO2); alternate). An ADP-ribosylserine modification is found at Ser-7. Position 12 is an N6-(beta-hydroxybutyryl)lysine; alternate (Lys-12). An N6-acetyllysine; alternate mark is found at Lys-12 and Lys-13. Residues Lys-12 and Lys-13 each carry the N6-crotonyllysine; alternate modification. N6-lactoyllysine; alternate is present on Lys-12. Position 13 is an N6-(2-hydroxyisobutyryl)lysine; alternate (Lys-13). Ser-15 is modified (phosphoserine; by STK4/MST1). N6-acetyllysine; alternate occurs at positions 16, 17, 21, and 24. Lys-16, Lys-17, Lys-21, and Lys-24 each carry N6-crotonyllysine; alternate. 4 positions are modified to N6-lactoyllysine; alternate: Lys-16, Lys-17, Lys-21, and Lys-24. Residue Lys-17 is modified to N6-glutaryllysine; alternate. 2 positions are modified to N6-(2-hydroxyisobutyryl)lysine; alternate: Lys-21 and Lys-24. The residue at position 21 (Lys-21) is an N6-(beta-hydroxybutyryl)lysine; alternate. The residue at position 21 (Lys-21) is an N6-butyryllysine; alternate. Lys-21 participates in a covalent cross-link: Glycyl lysine isopeptide (Lys-Gly) (interchain with G-Cter in SUMO2); alternate. Lys-25 is modified (N6-(2-hydroxyisobutyryl)lysine). Lys-35 is subject to N6-(2-hydroxyisobutyryl)lysine; alternate. The residue at position 35 (Lys-35) is an N6-(beta-hydroxybutyryl)lysine; alternate. N6-crotonyllysine; alternate is present on Lys-35. The residue at position 35 (Lys-35) is an N6-glutaryllysine; alternate. Lys-35 carries the N6-succinyllysine; alternate modification. Lys-35 participates in a covalent cross-link: Glycyl lysine isopeptide (Lys-Gly) (interchain with G-Cter in ubiquitin); alternate. Glu-36 is subject to PolyADP-ribosyl glutamic acid. Position 37 is a phosphoserine; by AMPK (Ser-37). 3 positions are modified to N6-(2-hydroxyisobutyryl)lysine; alternate: Lys-44, Lys-47, and Lys-58. Lys-44 bears the N6-lactoyllysine; alternate mark. N6-glutaryllysine; alternate is present on residues Lys-44 and Lys-47. Lys-47 is modified (N6-methyllysine; alternate). Lys-58 bears the N6,N6-dimethyllysine; alternate mark. Dimethylated arginine is present on Arg-80. Position 86 is an N6-(2-hydroxyisobutyryl)lysine; alternate (Lys-86). Position 86 is an N6-acetyllysine; alternate (Lys-86). Position 86 is an N6-lactoyllysine; alternate (Lys-86). N6,N6,N6-trimethyllysine; alternate is present on Lys-86. 2 positions are modified to omega-N-methylarginine: Arg-87 and Arg-93. N6-(2-hydroxyisobutyryl)lysine; alternate is present on Lys-109. Lys-109 carries the post-translational modification N6-(beta-hydroxybutyryl)lysine; alternate. The residue at position 109 (Lys-109) is an N6-lactoyllysine; alternate. The residue at position 109 (Lys-109) is an N6-glutaryllysine; alternate. N6-methyllysine; alternate is present on Lys-109. A glycan (O-linked (GlcNAc) serine) is linked at Ser-113. A Phosphothreonine modification is found at Thr-116. N6-(2-hydroxyisobutyryl)lysine; alternate occurs at positions 117 and 121. Lys-117 carries the post-translational modification N6-(beta-hydroxybutyryl)lysine; alternate. 2 positions are modified to N6-lactoyllysine; alternate: Lys-117 and Lys-121. Lys-117 and Lys-121 each carry N6-glutaryllysine; alternate. Residues Lys-117 and Lys-121 each carry the N6-succinyllysine; alternate modification. N6-methylated lysine; alternate is present on Lys-117. Lys-121 is covalently cross-linked (Glycyl lysine isopeptide (Lys-Gly) (interchain with G-Cter in ubiquitin); alternate).

Belongs to the histone H2B family. The nucleosome is a histone octamer containing two molecules each of H2A, H2B, H3 and H4 assembled in one H3-H4 heterotetramer and two H2A-H2B heterodimers. The octamer wraps approximately 147 bp of DNA. In terms of processing, monoubiquitination at Lys-35 (H2BK34Ub) by the MSL1/MSL2 dimer is required for histone H3 'Lys-4' (H3K4me) and 'Lys-79' (H3K79me) methylation and transcription activation at specific gene loci, such as HOXA9 and MEIS1 loci. Similarly, monoubiquitination at Lys-121 (H2BK120Ub) by the RNF20/40 complex gives a specific tag for epigenetic transcriptional activation and is also prerequisite for histone H3 'Lys-4' and 'Lys-79' methylation. It also functions cooperatively with the FACT dimer to stimulate elongation by RNA polymerase II. H2BK120Ub also acts as a regulator of mRNA splicing: deubiquitination by USP49 is required for efficient cotranscriptional splicing of a large set of exons. Post-translationally, phosphorylated on Ser-15 (H2BS14ph) by STK4/MST1 during apoptosis; which facilitates apoptotic chromatin condensation. Also phosphorylated on Ser-15 in response to DNA double strand breaks (DSBs), and in correlation with somatic hypermutation and immunoglobulin class-switch recombination. Phosphorylation at Ser-37 (H2BS36ph) by AMPK in response to stress promotes transcription. GlcNAcylation at Ser-113 promotes monoubiquitination of Lys-121. It fluctuates in response to extracellular glucose, and associates with transcribed genes. In terms of processing, ADP-ribosylated by PARP1 or PARP2 on Ser-7 (H2BS6ADPr) in response to DNA damage. H2BS6ADPr promotes recruitment of CHD1L. Poly ADP-ribosylation on Glu-36 (H2BE35ADPr) by PARP1 regulates adipogenesis: it inhibits phosphorylation at Ser-37 (H2BS36ph), thereby blocking expression of pro-adipogenetic genes. Post-translationally, crotonylation (Kcr) is specifically present in male germ cells and marks testis-specific genes in post-meiotic cells, including X-linked genes that escape sex chromosome inactivation in haploid cells. Crotonylation marks active promoters and enhancers and confers resistance to transcriptional repressors. It is also associated with post-meiotically activated genes on autosomes. Hydroxybutyrylation of histones is induced by starvation. In terms of processing, lactylated in macrophages by EP300/P300 by using lactoyl-CoA directly derived from endogenous or exogenous lactate, leading to stimulates gene transcription.

Its subcellular location is the nucleus. The protein resides in the chromosome. Its function is as follows. Core component of nucleosome. Nucleosomes wrap and compact DNA into chromatin, limiting DNA accessibility to the cellular machineries which require DNA as a template. Histones thereby play a central role in transcription regulation, DNA repair, DNA replication and chromosomal stability. DNA accessibility is regulated via a complex set of post-translational modifications of histones, also called histone code, and nucleosome remodeling. The polypeptide is Histone H2B type 2-B (Mus musculus (Mouse)).